Here is a 1954-residue protein sequence, read N- to C-terminus: Integrin beta-like protein C (1954 aa).

The first 20 residues, 1–20, serve as a signal peptide directing secretion; the sequence is MNKLFYLFILIASLFILTDA. Over 21–1883 the chain is Extracellular; the sequence is SHFRFGTISW…TTTQTNDNKT (1863 aa). Residues Asn138 and Asn354 are each glycosylated (N-linked (GlcNAc...) asparagine). Positions 428-465 constitute an EGF-like domain; that stretch reads YGENCVAVPPCVNGVPNSGINGDGKCLCSNGWTGADCS. Intrachain disulfides connect Cys438/Cys453 and Cys455/Cys464. Asn479 is a glycosylation site (N-linked (GlcNAc...) asparagine). The 186-residue stretch at 521 to 706 folds into the VWFA domain; that stretch reads DVYVLVDANL…TGVKNVLSKI (186 aa). Residues Asn1348, Asn1382, Asn1628, Asn1678, Asn1742, Asn1770, Asn1820, Asn1860, and Asn1881 are each glycosylated (N-linked (GlcNAc...) asparagine). A helical transmembrane segment spans residues 1884 to 1904; the sequence is VLTGAIAGAAAGTALIAAAAW. Over 1905–1954 the chain is Cytoplasmic; the sequence is RLLRKAAPPTDTFFSEAAFLGDGVSSNPLYEQSASAAENPLYQSASDTTD.

Belongs to the SIB family. Interacts with talA/talin.

The protein resides in the membrane. Its function is as follows. Implicated in cellular adhesion. The protein is Integrin beta-like protein C (sibC) of Dictyostelium discoideum (Social amoeba).